We begin with the raw amino-acid sequence, 368 residues long: Ferrochelatase (368 aa).

Fe cation is bound by residues H209 and E290.

It belongs to the ferrochelatase family.

Its subcellular location is the cytoplasm. It catalyses the reaction heme b + 2 H(+) = protoporphyrin IX + Fe(2+). It functions in the pathway porphyrin-containing compound metabolism; protoheme biosynthesis; protoheme from protoporphyrin-IX: step 1/1. Its function is as follows. Catalyzes the ferrous insertion into protoporphyrin IX. The polypeptide is Ferrochelatase (Herminiimonas arsenicoxydans).